The chain runs to 76 residues: Acyl carrier protein (76 aa).

The 76-residue stretch at 1–76 folds into the Carrier domain; it reads MSVEEKVKKI…DAIDYVSNKQ (76 aa). Ser36 carries the O-(pantetheine 4'-phosphoryl)serine modification.

The protein belongs to the acyl carrier protein (ACP) family. Post-translationally, 4'-phosphopantetheine is transferred from CoA to a specific serine of apo-ACP by AcpS. This modification is essential for activity because fatty acids are bound in thioester linkage to the sulfhydryl of the prosthetic group.

It localises to the cytoplasm. It participates in lipid metabolism; fatty acid biosynthesis. In terms of biological role, carrier of the growing fatty acid chain in fatty acid biosynthesis. The polypeptide is Acyl carrier protein (Nitratidesulfovibrio vulgaris (strain ATCC 29579 / DSM 644 / CCUG 34227 / NCIMB 8303 / VKM B-1760 / Hildenborough) (Desulfovibrio vulgaris)).